The primary structure comprises 138 residues: Small ribosomal subunit protein uS11c (138 aa).

The interval 1 to 22 is disordered; sequence MAKPIPRIGSQRNRRINSRKNA. A compositionally biased stretch (basic residues) spans 12–22; it reads RNRRINSRKNA.

It belongs to the universal ribosomal protein uS11 family. In terms of assembly, part of the 30S ribosomal subunit.

The protein resides in the plastid. Its subcellular location is the chloroplast. In Fagopyrum esculentum subsp. ancestrale (Wild buckwheat), this protein is Small ribosomal subunit protein uS11c.